We begin with the raw amino-acid sequence, 277 residues long: Protein EURL homolog (277 aa).

Positions 173–201 (LGLWPGERPQNREQRDSRQRRHSGHSREE) are disordered. Positions 197 to 229 (HSREELMRKNVEELRQLNEQLLLQIQNVFEELS) form a coiled coil.

The protein belongs to the EURL family.

In terms of biological role, plays a role in cortical progenitor cell proliferation and differentiation. May promote dendritic spine development of post-migratory cortical projection neurons by modulating the beta-catenin signaling pathway. The sequence is that of Protein EURL homolog from Danio rerio (Zebrafish).